Here is a 193-residue protein sequence, read N- to C-terminus: RNA pyrophosphohydrolase (193 aa).

One can recognise a Nudix hydrolase domain in the interval 6–149 (GFRPNVGIIL…KRDVYQRALQ (144 aa)). The Nudix box motif lies at 38–59 (GGIKFGETPEQAMFRELEEEVG). The interval 174 to 193 (THSARKTDEPSTEQTKPNNE) is disordered.

It belongs to the Nudix hydrolase family. RppH subfamily. A divalent metal cation is required as a cofactor.

Functionally, accelerates the degradation of transcripts by removing pyrophosphate from the 5'-end of triphosphorylated RNA, leading to a more labile monophosphorylated state that can stimulate subsequent ribonuclease cleavage. The sequence is that of RNA pyrophosphohydrolase from Herminiimonas arsenicoxydans.